The chain runs to 211 residues: Thiamine-phosphate synthase (211 aa).

4-amino-2-methyl-5-(diphosphooxymethyl)pyrimidine contacts are provided by residues 35-39 (QLRDK) and asparagine 67. Positions 68 and 87 each coordinate Mg(2+). Residue serine 106 participates in 4-amino-2-methyl-5-(diphosphooxymethyl)pyrimidine binding. 132–134 (TGS) is a 2-[(2R,5Z)-2-carboxy-4-methylthiazol-5(2H)-ylidene]ethyl phosphate binding site. Lysine 135 contacts 4-amino-2-methyl-5-(diphosphooxymethyl)pyrimidine. Residues glycine 163 and 183–184 (IS) contribute to the 2-[(2R,5Z)-2-carboxy-4-methylthiazol-5(2H)-ylidene]ethyl phosphate site.

This sequence belongs to the thiamine-phosphate synthase family. It depends on Mg(2+) as a cofactor.

The enzyme catalyses 2-[(2R,5Z)-2-carboxy-4-methylthiazol-5(2H)-ylidene]ethyl phosphate + 4-amino-2-methyl-5-(diphosphooxymethyl)pyrimidine + 2 H(+) = thiamine phosphate + CO2 + diphosphate. The catalysed reaction is 2-(2-carboxy-4-methylthiazol-5-yl)ethyl phosphate + 4-amino-2-methyl-5-(diphosphooxymethyl)pyrimidine + 2 H(+) = thiamine phosphate + CO2 + diphosphate. It catalyses the reaction 4-methyl-5-(2-phosphooxyethyl)-thiazole + 4-amino-2-methyl-5-(diphosphooxymethyl)pyrimidine + H(+) = thiamine phosphate + diphosphate. It functions in the pathway cofactor biosynthesis; thiamine diphosphate biosynthesis; thiamine phosphate from 4-amino-2-methyl-5-diphosphomethylpyrimidine and 4-methyl-5-(2-phosphoethyl)-thiazole: step 1/1. Its function is as follows. Condenses 4-methyl-5-(beta-hydroxyethyl)thiazole monophosphate (THZ-P) and 2-methyl-4-amino-5-hydroxymethyl pyrimidine pyrophosphate (HMP-PP) to form thiamine monophosphate (TMP). This Methanoculleus marisnigri (strain ATCC 35101 / DSM 1498 / JR1) protein is Thiamine-phosphate synthase.